The primary structure comprises 504 residues: MLNSAACIVLAITAVLGRMIYTHFYSNTCAAMKRALAHIPELHFEEDDTPERYRTETRSLVRKGYERYLQYGIPFQMRNPVSELGNQVVLPVKYLEEVKRAPRSLYSFEAFSEKVFLLKYIDAPRQTDALLYAVKLDINKNMDHILNGLWDETQVLLKETVPVTGQITIPGGELACNIIARTMSYVLVGPSLCRNPEWTKIAIEATFALVAGTQGLRDRYSPGWRWLARFQRSSEKLGEVREKAMELIKPLHEERMKALKDDSGQFRNFYDTIFWTMNKRKVDRSLRAIVDQQLFLTLASIHTTAGTLQSILCDWLAHPEYHDEILAEINERLAAFKGAGGKWTQQEVNEMKKLDSFMKESTRVNPVGCMTVQRYAQRTHTFSDGFVLPAGTIFQFPSDAVHHDPKLFPDPEKFDGHRFLRLREKDANAYHYGYVSDTTLNWGAGTHACPGRFLATYVLKFAFIALITQYDLSFPEGTGKPGYFYFDNSVRIDPTAKLDIKKSS.

The N-terminal stretch at 1–17 (MLNSAACIVLAITAVLG) is a signal peptide. Cysteine 449 contacts heme.

Belongs to the cytochrome P450 family. The cofactor is heme.

It participates in mycotoxin biosynthesis. Cytochrome P450 monooxygenase; part of the gene cluster that mediates the biosynthesis of the mycotoxin pyrichalasin H, a tyrosine-derived cytochalasan that inhibits the growth of rice seedlings, but also inhibits lymphocyte capping and actin polymerization and alters cell morphology. Pyrichalasin H is indicated as the responsible agent for the genus-specific pathogenicity of M.grisea toward crabgrass. The first step in the pathway is catalyzed by the O-methyltransferase pyiA which methylates free tyrosine to generate the precursor O-methyltyrosine. The hybrid PKS-NRPS pyiS, assisted by the enoyl reductase pyiC, are responsible for fusion of the O-methyltyrosine precursor and the polyketide backbone. The polyketide synthase module (PKS) of pyiS is responsible for the synthesis of the polyketide backbone and the downstream nonribosomal peptide synthetase (NRPS) amidates the carboxyl end of the polyketide with the O-methyltyrosine precursor. As the NRPS A-domain demonstrates substrate tolerance, pyiS can also use phenylalanine, tyrosine and even para-chlorophenylalanine as amino acid precursor, which leads to the production of novel cytochalasans, including halogenated cytochalasans. Because pyiS lacks a designated enoylreductase (ER) domain, the required activity is provided the enoyl reductase pyiC. Reduction by the hydrolyase pyiE leads to 1,5-dihydropyrrolone, which is substrate for dehydration and intra-molecular Diels-Alder cyclization by the Diels-Alderase pyiF to yield the required isoindolone-fused macrocycle. The tailoring cytochrome P450 monooxygenases piyD and piyG catalyze the hydroxylation at C-18 and C-7, respectivily, whereas the short-chain dehydrogenase/reductase pyiH reduces the carbonyl at C-21 in preparation for the transfer of an acetyl group by the acetyltransferase pyiB. These 3 reactions whose order is not clear yet, lead to the production of O-methylpyrichalasin J, a deacetylated pyrichalasin H. Finally, pyiB to converts O-methylpyrichalasin J into the final product pyrichalasin H via acetylation of C-21. The polypeptide is Pyrichalasin C-7 hydroxylase (Pyricularia grisea (Crabgrass-specific blast fungus)).